The following is a 342-amino-acid chain: UDP-N-acetylglucosamine--N-acetylmuramyl-(pentapeptide) pyrophosphoryl-undecaprenol N-acetylglucosamine transferase (342 aa).

UDP-N-acetyl-alpha-D-glucosamine-binding positions include 10 to 12 (TGG), asparagine 124, serine 177, and glutamine 275.

Belongs to the glycosyltransferase 28 family. MurG subfamily.

Its subcellular location is the cell inner membrane. The catalysed reaction is di-trans,octa-cis-undecaprenyl diphospho-N-acetyl-alpha-D-muramoyl-L-alanyl-D-glutamyl-meso-2,6-diaminopimeloyl-D-alanyl-D-alanine + UDP-N-acetyl-alpha-D-glucosamine = di-trans,octa-cis-undecaprenyl diphospho-[N-acetyl-alpha-D-glucosaminyl-(1-&gt;4)]-N-acetyl-alpha-D-muramoyl-L-alanyl-D-glutamyl-meso-2,6-diaminopimeloyl-D-alanyl-D-alanine + UDP + H(+). Its pathway is cell wall biogenesis; peptidoglycan biosynthesis. Cell wall formation. Catalyzes the transfer of a GlcNAc subunit on undecaprenyl-pyrophosphoryl-MurNAc-pentapeptide (lipid intermediate I) to form undecaprenyl-pyrophosphoryl-MurNAc-(pentapeptide)GlcNAc (lipid intermediate II). The chain is UDP-N-acetylglucosamine--N-acetylmuramyl-(pentapeptide) pyrophosphoryl-undecaprenol N-acetylglucosamine transferase from Campylobacter jejuni (strain RM1221).